The chain runs to 129 residues: Thioredoxin-like 3-3 (129 aa).

Over residues 1–10 the composition is skewed to basic and acidic residues; that stretch reads MEEGEAKKTG. A disordered region spans residues 1 to 30; that stretch reads MEEGEAKKTGLEGTGLSLPGSSHGNLRSAG. The Thioredoxin domain maps to 7 to 129; the sequence is KKTGLEGTGL…RLHDRLWLHS (123 aa). The segment covering 19–30 has biased composition (polar residues); that stretch reads PGSSHGNLRSAG. Active-site nucleophile residues include C58 and C61. C58 and C61 are oxidised to a cystine.

The protein belongs to the thioredoxin family.

Functionally, probable thiol-disulfide oxidoreductase that may participate in various redox reactions. The protein is Thioredoxin-like 3-3 of Oryza sativa subsp. japonica (Rice).